A 92-amino-acid polypeptide reads, in one-letter code: Non-specific lipid-transfer protein B (92 aa).

Cystine bridges form between Cys3–Cys51, Cys13–Cys28, Cys29–Cys74, and Cys49–Cys88.

It belongs to the plant LTP family.

Its function is as follows. Plant non-specific lipid-transfer proteins transfer phospholipids as well as galactolipids across membranes. May play a role in wax or cutin deposition in the cell walls of expanding epidermal cells and certain secretory tissues. This is Non-specific lipid-transfer protein B from Ricinus communis (Castor bean).